Reading from the N-terminus, the 341-residue chain is N-acetyl-gamma-glutamyl-phosphate reductase (341 aa).

Residue C151 is part of the active site.

It belongs to the NAGSA dehydrogenase family. Type 1 subfamily.

The protein resides in the cytoplasm. The enzyme catalyses N-acetyl-L-glutamate 5-semialdehyde + phosphate + NADP(+) = N-acetyl-L-glutamyl 5-phosphate + NADPH + H(+). Its pathway is amino-acid biosynthesis; L-arginine biosynthesis; N(2)-acetyl-L-ornithine from L-glutamate: step 3/4. Catalyzes the NADPH-dependent reduction of N-acetyl-5-glutamyl phosphate to yield N-acetyl-L-glutamate 5-semialdehyde. This is N-acetyl-gamma-glutamyl-phosphate reductase from Chlorobaculum tepidum (strain ATCC 49652 / DSM 12025 / NBRC 103806 / TLS) (Chlorobium tepidum).